We begin with the raw amino-acid sequence, 239 residues long: NAD-dependent protein deacylase (239 aa).

A Deacetylase sirtuin-type domain is found at Met-1 to Met-239. Gly-8–Trp-27 contacts NAD(+). Residues Tyr-52 and Arg-55 each coordinate substrate. Gln-93–Asp-96 lines the NAD(+) pocket. Catalysis depends on His-111, which acts as the Proton acceptor. NAD(+) contacts are provided by residues Gly-182 to Ser-184, Asn-207 to Asp-209, and Ala-225.

This sequence belongs to the sirtuin family. Class III subfamily.

The protein resides in the cytoplasm. It catalyses the reaction N(6)-acetyl-L-lysyl-[protein] + NAD(+) + H2O = 2''-O-acetyl-ADP-D-ribose + nicotinamide + L-lysyl-[protein]. It carries out the reaction N(6)-succinyl-L-lysyl-[protein] + NAD(+) + H2O = 2''-O-succinyl-ADP-D-ribose + nicotinamide + L-lysyl-[protein]. NAD-dependent lysine deacetylase and desuccinylase that specifically removes acetyl and succinyl groups on target proteins. Modulates the activities of several proteins which are inactive in their acylated form. In Rhodopirellula baltica (strain DSM 10527 / NCIMB 13988 / SH1), this protein is NAD-dependent protein deacylase.